A 290-amino-acid polypeptide reads, in one-letter code: MASEKQYIAGVSGGSDSMLMLKLYQKKIACVVHVNYNTRSTSLRDQKLVEQYCQKLNIPLVVHTVDPDLVWKKNFQNQARKIRFDQFKKTAKLYQTNKLLLAHHRDDFIEQAKMQLDAKKRAVYYGIKTRCELYGLKIYRPLMKYWKDEIIALCRQDHIPYEIDETNKLPIYKRNEVRLEIEKWSKIEKEQFYIAICAMNKTIAQKLFVLMKKAKKWLLQPDVRELKRFSIIDQKQLIYSYLIYHKINVNGEKIDAILDFIQPSQQKQYRLQNDIFLMVKNQCLALLYKS.

12–17 is an ATP binding site; the sequence is SGGSDS.

The protein belongs to the tRNA(Ile)-lysidine synthase family.

It is found in the cytoplasm. It catalyses the reaction cytidine(34) in tRNA(Ile2) + L-lysine + ATP = lysidine(34) in tRNA(Ile2) + AMP + diphosphate + H(+). Its function is as follows. Ligates lysine onto the cytidine present at position 34 of the AUA codon-specific tRNA(Ile) that contains the anticodon CAU, in an ATP-dependent manner. Cytidine is converted to lysidine, thus changing the amino acid specificity of the tRNA from methionine to isoleucine. The sequence is that of tRNA(Ile)-lysidine synthase from Mycoplasma genitalium (strain ATCC 33530 / DSM 19775 / NCTC 10195 / G37) (Mycoplasmoides genitalium).